The chain runs to 39 residues: Cytochrome b559 subunit beta (39 aa).

A helical membrane pass occupies residues 14 to 30; the sequence is WLAVHGLAVPTVFFLGS. H18 is a heme binding site.

This sequence belongs to the PsbE/PsbF family. Heterodimer of an alpha subunit and a beta subunit. PSII is composed of 1 copy each of membrane proteins PsbA, PsbB, PsbC, PsbD, PsbE, PsbF, PsbH, PsbI, PsbJ, PsbK, PsbL, PsbM, PsbT, PsbX, PsbY, PsbZ, Psb30/Ycf12, at least 3 peripheral proteins of the oxygen-evolving complex and a large number of cofactors. It forms dimeric complexes. It depends on heme b as a cofactor.

Its subcellular location is the plastid. The protein localises to the chloroplast thylakoid membrane. Its function is as follows. This b-type cytochrome is tightly associated with the reaction center of photosystem II (PSII). PSII is a light-driven water:plastoquinone oxidoreductase that uses light energy to abstract electrons from H(2)O, generating O(2) and a proton gradient subsequently used for ATP formation. It consists of a core antenna complex that captures photons, and an electron transfer chain that converts photonic excitation into a charge separation. The sequence is that of Cytochrome b559 subunit beta from Gnetum gnemon (Spanish joint-fir).